A 154-amino-acid polypeptide reads, in one-letter code: Putative pre-16S rRNA nuclease (154 aa).

The protein belongs to the YqgF nuclease family.

It is found in the cytoplasm. Its function is as follows. Could be a nuclease involved in processing of the 5'-end of pre-16S rRNA. The protein is Putative pre-16S rRNA nuclease of Rickettsia conorii (strain ATCC VR-613 / Malish 7).